Here is a 159-residue protein sequence, read N- to C-terminus: 2-C-methyl-D-erythritol 2,4-cyclodiphosphate synthase (159 aa).

Asp8 and His10 together coordinate a divalent metal cation. 4-CDP-2-C-methyl-D-erythritol 2-phosphate-binding positions include 8–10 (DVH) and 34–35 (HS). An a divalent metal cation-binding site is contributed by His42. 4-CDP-2-C-methyl-D-erythritol 2-phosphate is bound by residues 56-58 (DIG), 100-106 (AQAPKMA), 132-135 (TTTE), Phe139, and Arg142.

It belongs to the IspF family. As to quaternary structure, homotrimer. It depends on a divalent metal cation as a cofactor.

The catalysed reaction is 4-CDP-2-C-methyl-D-erythritol 2-phosphate = 2-C-methyl-D-erythritol 2,4-cyclic diphosphate + CMP. Its pathway is isoprenoid biosynthesis; isopentenyl diphosphate biosynthesis via DXP pathway; isopentenyl diphosphate from 1-deoxy-D-xylulose 5-phosphate: step 4/6. Its function is as follows. Involved in the biosynthesis of isopentenyl diphosphate (IPP) and dimethylallyl diphosphate (DMAPP), two major building blocks of isoprenoid compounds. Catalyzes the conversion of 4-diphosphocytidyl-2-C-methyl-D-erythritol 2-phosphate (CDP-ME2P) to 2-C-methyl-D-erythritol 2,4-cyclodiphosphate (ME-CPP) with a corresponding release of cytidine 5-monophosphate (CMP). The chain is 2-C-methyl-D-erythritol 2,4-cyclodiphosphate synthase from Marinobacter nauticus (strain ATCC 700491 / DSM 11845 / VT8) (Marinobacter aquaeolei).